Reading from the N-terminus, the 809-residue chain is Chorion peroxidase (809 aa).

Residues 1 to 21 form the signal peptide; the sequence is MSRILFILLLLIVTQLSELQA. Residues 22 to 223 constitute a propeptide that is removed on maturation; that stretch reads AAFSVRQNRF…KFTETPLAHH (202 aa). Residues 36–55 form a disordered region; that stretch reads DLQTPAPLATSTESSKKPEK. An N-linked (GlcNAc...) asparagine glycan is attached at asparagine 110. Cysteine 224 carries the N-acetylcysteine; in Chorion peroxidase light chain modification. Cysteine 230 and cysteine 244 are disulfide-bonded. Residue histidine 320 is the Proton acceptor of the active site. A disulfide bridge connects residues cysteine 448 and cysteine 457. Residue histidine 568 coordinates heme b. A disulfide bond links cysteine 765 and cysteine 794.

This sequence belongs to the peroxidase family. XPO subfamily. Heterodimer. Heme b is required as a cofactor. As to expression, expressed at low levels in the germarium and early follicles. Expression becomes progressively stronger during vitellogenesis, and is highly expressed in germ cells and somatic cells. A subset of follicle cells, termed border cells (BC), exhibit a high level of expression.

It localises to the secreted. It carries out the reaction 2 a phenolic donor + H2O2 = 2 a phenolic radical donor + 2 H2O. In terms of biological role, required for ovarian follicle maturation. Involved in the formation of a rigid and insoluble egg chorion by catalyzing chorion protein cross-linking through dityrosine formation and phenol oxidase-catalyzed chorion melanization. In Drosophila melanogaster (Fruit fly), this protein is Chorion peroxidase (Pxt).